Reading from the N-terminus, the 71-residue chain is Conotoxin ba5b (71 aa).

A signal peptide spans 1 to 19 (MLCLPVFITLLLLVSPSAA). The propeptide occupies 20 to 52 (LPVESELQRDLTQDSPKDFRIREPLLLSKMFDR). Intrachain disulfides connect C54/C63 and C55/C64. A Cysteine amide modification is found at C64. The propeptide occupies 66–71 (RYQRGS).

Belongs to the conotoxin T superfamily. Expressed by the venom duct.

It is found in the secreted. This is Conotoxin ba5b from Conus bayani (Bayan's cone).